A 257-amino-acid chain; its full sequence is NAD-dependent protein deacetylase (257 aa).

Positions Asn3–Ile252 constitute a Deacetylase sirtuin-type domain. Residues Ala29, Thr33, Phe40, Arg41, Gln105, Ile107, Asp108, and His123 each contribute to the NAD(+) site. A nicotinamide-binding site is contributed by Phe40. Residues Ile107 and Asp108 each contribute to the nicotinamide site. His123 acts as the Proton acceptor in catalysis. Cys131, Cys134, Cys156, and Cys159 together coordinate Zn(2+). Residues Ser195, Ser196, and Asn220 each coordinate NAD(+).

This sequence belongs to the sirtuin family. Class U subfamily. The cofactor is Zn(2+).

Its subcellular location is the cytoplasm. It catalyses the reaction N(6)-acetyl-L-lysyl-[protein] + NAD(+) + H2O = 2''-O-acetyl-ADP-D-ribose + nicotinamide + L-lysyl-[protein]. Its function is as follows. NAD-dependent protein deacetylase which modulates the activities of several enzymes which are inactive in their acetylated form. Deacetylates the N-terminal lysine residue of Alba, the major archaeal chromatin protein and that, in turn, increases Alba's DNA binding affinity, thereby repressing transcription. In Caldivirga maquilingensis (strain ATCC 700844 / DSM 13496 / JCM 10307 / IC-167), this protein is NAD-dependent protein deacetylase.